The primary structure comprises 431 residues: tRNA(Ile)-lysidine synthase (431 aa).

25-30 (SGGLDS) is an ATP binding site.

It belongs to the tRNA(Ile)-lysidine synthase family.

It localises to the cytoplasm. It carries out the reaction cytidine(34) in tRNA(Ile2) + L-lysine + ATP = lysidine(34) in tRNA(Ile2) + AMP + diphosphate + H(+). Functionally, ligates lysine onto the cytidine present at position 34 of the AUA codon-specific tRNA(Ile) that contains the anticodon CAU, in an ATP-dependent manner. Cytidine is converted to lysidine, thus changing the amino acid specificity of the tRNA from methionine to isoleucine. The sequence is that of tRNA(Ile)-lysidine synthase from Legionella pneumophila (strain Lens).